Here is a 160-residue protein sequence, read N- to C-terminus: Protransforming growth factor alpha (160 aa).

An N-terminal signal peptide occupies residues Met-1–Leu-23. A propeptide spans Glu-24–Ala-39 (removed in mature form). Over Glu-24–Gln-98 the chain is Extracellular. A glycan (N-linked (GlcNAc...) asparagine) is linked at Asn-25. In terms of domain architecture, EGF-like spans His-43–Glu-83. 3 disulfides stabilise this stretch: Cys-47/Cys-60, Cys-55/Cys-71, and Cys-73/Cys-82. Positions Val-90–Val-160 are cleaved as a propeptide — removed in mature form. A helical membrane pass occupies residues Ala-99–Cys-124. The Cytoplasmic portion of the chain corresponds to Gln-125 to Val-160. Residues Cys-153 and Cys-154 are each lipidated (S-palmitoyl cysteine).

As to quaternary structure, interacts with the PDZ domains of MAGI3, SDCBP and SNTA1. The interaction with SDCBP, is required for the targeting to the cell surface. In the endoplasmic reticulum, in its immature form (i.e. with a prosegment and lacking full N-glycosylation), interacts with CNIH. In the Golgi apparatus, may form a complex with CNIH and GORASP2. Interacts (via cytoplasmic C-terminal domain) with NKD2. Isoform 1, isoform 3 and isoform 4 are expressed in keratinocytes and tumor-derived cell lines.

It is found in the secreted. The protein resides in the extracellular space. Its subcellular location is the cell membrane. In terms of biological role, TGF alpha is a mitogenic polypeptide that is able to bind to the EGF receptor/EGFR and to act synergistically with TGF beta to promote anchorage-independent cell proliferation in soft agar. The protein is Protransforming growth factor alpha (TGFA) of Homo sapiens (Human).